We begin with the raw amino-acid sequence, 293 residues long: Transcription initiation factor IIB 2 (293 aa).

The segment at 1-31 adopts a TFIIB-type zinc-finger fold; it reads MKCPYCKTDNAITYDVEKGMYVCTNCASVIE. 4 residues coordinate Zn(2+): cysteine 3, cysteine 6, cysteine 23, and cysteine 26. 2 tandem repeats follow at residues 107 to 193 and 204 to 285.

This sequence belongs to the TFIIB family.

Functionally, stabilizes TBP binding to an archaeal box-A promoter. Also responsible for recruiting RNA polymerase II to the pre-initiation complex (DNA-TBP-TFIIB). This Saccharolobus solfataricus (strain ATCC 35092 / DSM 1617 / JCM 11322 / P2) (Sulfolobus solfataricus) protein is Transcription initiation factor IIB 2.